A 1365-amino-acid polypeptide reads, in one-letter code: Killer toxin-resistance protein 5 (1365 aa).

The signal sequence occupies residues 1–17 (MRLLALVLLLLCAPLRA). N-linked (GlcNAc...) asparagine glycans are attached at residues Asn115, Asn228, Asn293, Asn457, Asn519, Asn523, Asn644, Asn870, Asn1091, Asn1150, and Asn1195. Positions 1334–1365 (FASSPGDEDVPGESVSSKYQDSDNAAPLHDEL) are disordered. Over residues 1347-1356 (SVSSKYQDSD) the composition is skewed to polar residues. The Prevents secretion from ER signature appears at 1362–1365 (HDEL).

The protein to D.melanogaster UGGG.

Its subcellular location is the endoplasmic reticulum lumen. Functionally, required for (1-&gt;6)-beta-D-glucan synthesis and normal cell growth. This Saccharomyces cerevisiae (strain ATCC 204508 / S288c) (Baker's yeast) protein is Killer toxin-resistance protein 5 (KRE5).